A 697-amino-acid chain; its full sequence is Sodium-dependent phosphate transport protein 2B (697 aa).

The tract at residues Met1–Val45 is disordered. Over Met1–Thr91 the chain is Cytoplasmic. A helical transmembrane segment spans residues Leu92–Val112. Residues Cys113–Asn136 lie on the Extracellular side of the membrane. The chain crosses the membrane as a helical span at residues Asn137–Val157. Topologically, residues Gln158–Ala213 are cytoplasmic. Residues Phe214–Leu234 traverse the membrane as a helical segment. The Extracellular portion of the chain corresponds to Glu235–Ala363. N-linked (GlcNAc...) asparagine glycans are attached at residues Asn295, Asn308, Asn321, and Asn356. A disulfide bridge links Cys303 with Cys350. A helical transmembrane segment spans residues Val364–Val384. The Cytoplasmic portion of the chain corresponds to Lys385–Pro408. Residues Phe409 to Ile429 form a helical membrane-spanning segment. The Extracellular segment spans residues Val430–Gln486. The helical transmembrane segment at Ile487 to Phe507 threads the bilayer. Residues Thr508–Arg526 lie on the Cytoplasmic side of the membrane. The helical transmembrane segment at Trp527–Leu547 threads the bilayer. At Ser548–Gly551 the chain is on the extracellular side. A helical transmembrane segment spans residues Trp552–Leu572. Residues Arg573–Val696 are Cytoplasmic-facing.

It belongs to the SLC34A transporter family. In terms of tissue distribution, highly abundant in the ileum of small intestine, whereas it is almost absent in the duodenum and in the jejunum.

It localises to the apical cell membrane. It catalyses the reaction 3 Na(+)(out) + phosphate(out) = 3 Na(+)(in) + phosphate(in). Functionally, involved in actively transporting phosphate into cells via Na(+) cotransport. The polypeptide is Sodium-dependent phosphate transport protein 2B (Slc34a2) (Mus musculus (Mouse)).